The following is a 498-amino-acid chain: Transcription factor kayak (498 aa).

A compositionally biased stretch (polar residues) spans 108-127 (ASLGQGSESEDSNASYNDTQ). Disordered stretches follow at residues 108-144 (ASLGQGSESEDSNASYNDTQMNEEQDTTDTSSAHTDS) and 177-234 (GSAS…KRRV). 2 stretches are compositionally biased toward low complexity: residues 135–144 (TDTSSAHTDS) and 177–191 (GSASVGSSNANTSNT). One can recognise a bZIP domain in the interval 212–275 (EQKRAVRRER…KQLEYLLATH (64 aa)). The tract at residues 214 to 233 (KRAVRRERNKQAAARCRKRR) is basic motif. The tract at residues 240–247 (LTEEVEQL) is leucine-zipper. A compositionally biased stretch (low complexity) spans 304 to 325 (AGSSGSGASSHHNHNSNDSSNG). Disordered regions lie at residues 304–345 (AGSS…SPLD) and 465–498 (TPVSGPLVPNSSSTNKHPLELPTPTAEPSKLVSL). Residues 333–343 (TLNSTGRSNSP) show a composition bias toward polar residues. Ser-342 is subject to Phosphoserine.

The protein belongs to the bZIP family. Fos subfamily. Homodimer. Heterodimer with Jra. The kay-Jra heterodimer binds more stably to the AP-1 site than either of the two proteins alone.

Its subcellular location is the nucleus. In terms of biological role, developmentally regulated transcription factor AP-1 binds and recognizes the enhancer DNA sequence: 5'-TGA[CG]TCA-3'. May play a role in the function or determination of a particular subset of cells in the developing embryo. It is able to carry out its function either independently of or in conjunction with Jra. This Drosophila simulans (Fruit fly) protein is Transcription factor kayak.